We begin with the raw amino-acid sequence, 239 residues long: Ribosomal RNA small subunit methyltransferase G (239 aa).

Residues Gly-79, Phe-84, 130 to 131, and Arg-149 each bind S-adenosyl-L-methionine; that span reads AE.

It belongs to the methyltransferase superfamily. RNA methyltransferase RsmG family.

Its subcellular location is the cytoplasm. Functionally, specifically methylates the N7 position of a guanine in 16S rRNA. The sequence is that of Ribosomal RNA small subunit methyltransferase G from Lactobacillus delbrueckii subsp. bulgaricus (strain ATCC BAA-365 / Lb-18).